The chain runs to 201 residues: 3-isopropylmalate dehydratase small subunit (201 aa).

The protein belongs to the LeuD family. LeuD type 1 subfamily. Heterodimer of LeuC and LeuD.

The enzyme catalyses (2R,3S)-3-isopropylmalate = (2S)-2-isopropylmalate. It participates in amino-acid biosynthesis; L-leucine biosynthesis; L-leucine from 3-methyl-2-oxobutanoate: step 2/4. Catalyzes the isomerization between 2-isopropylmalate and 3-isopropylmalate, via the formation of 2-isopropylmaleate. This Shewanella sp. (strain ANA-3) protein is 3-isopropylmalate dehydratase small subunit.